Consider the following 426-residue polypeptide: Methylamine dehydrogenase heavy chain (426 aa).

An N-terminal signal peptide occupies residues 1 to 31 (MASARESTPRYLTLIGATLACSALALGAAQA). Positions 32–64 (QTEPAEPEAPAETAAADAAGQTEGQRGAAEAAA) are disordered. Residues C221 and C236 are joined by a disulfide bond.

It belongs to the aromatic amine dehydrogenase heavy chain family. Tetramer of two light and two heavy chains.

Its subcellular location is the periplasm. It catalyses the reaction 2 oxidized [amicyanin] + methylamine + H2O = 2 reduced [amicyanin] + formaldehyde + NH4(+) + 2 H(+). In terms of biological role, methylamine dehydrogenase carries out the oxidation of methylamine. Electrons are passed from methylamine dehydrogenase to amicyanin. The protein is Methylamine dehydrogenase heavy chain (mauB) of Paracoccus versutus (Thiobacillus versutus).